A 426-amino-acid polypeptide reads, in one-letter code: MKIKSISGNTSVSLKRSIDAGTEEQRKAVRGIIEEVKKNGNAAVSAFTRQFDGADVAGFRVSEEEIKEAYSALEERDLEIIQAAIFNIKEYHERQLATSWFYHRKDGTMLGQKITPLDSAGVYVPGGTAAYPSSVLMNVIPALVAGVDRIVLASPPGKDGKLSAGVLAAAAELGVTEIYKMGGAQAIAALAYGTETITPVDKITGPGNIYVALAKREVFGQVDIDMIAGPSEIAILADSTANYREIAADLLSQAEHDAMASSILVTDSETLAESVLKEVYRQLEHLPRKEIARQSIDNYGLIYVTETMNEAVSVINELAPEHLEILTVQPDALLGQIKHAGAIFLGRYSSEPVGDYFAGPNHVLPTNGTARFSSPLNVTDFQKRSSIISYSREAFRANAEKIAAFARLEGLEAHARAIESRNREED.

Tyr123, Gln185, and Asn208 together coordinate NAD(+). Ser231, Gln253, and His256 together coordinate substrate. Zn(2+) is bound by residues Gln253 and His256. Catalysis depends on proton acceptor residues Glu321 and His322. Substrate-binding residues include His322, Asp355, Glu409, and His414. Position 355 (Asp355) interacts with Zn(2+). His414 is a binding site for Zn(2+).

The protein belongs to the histidinol dehydrogenase family. Zn(2+) is required as a cofactor.

The catalysed reaction is L-histidinol + 2 NAD(+) + H2O = L-histidine + 2 NADH + 3 H(+). The protein operates within amino-acid biosynthesis; L-histidine biosynthesis; L-histidine from 5-phospho-alpha-D-ribose 1-diphosphate: step 9/9. Its function is as follows. Catalyzes the sequential NAD-dependent oxidations of L-histidinol to L-histidinaldehyde and then to L-histidine. In Bacillus licheniformis (strain ATCC 14580 / DSM 13 / JCM 2505 / CCUG 7422 / NBRC 12200 / NCIMB 9375 / NCTC 10341 / NRRL NRS-1264 / Gibson 46), this protein is Histidinol dehydrogenase.